The following is a 432-amino-acid chain: MGNNVVVLGTQWGDEGKGKIVDLLTERAKYVVRYQGGHNAGHTLVINGEKTVLHLIPSGILRENVTSIIGNGVVLSPAALMKEMKELEDRGIPVRERLLLSEACPLILDYHVALDNAREKARGAKAIGTTGRGIGPAYEDKVARRGLRVGDLFDKETFAEKLKEVMEYHNFQLVNYYKAEAVDYQKVLDDTMAVADILTSMVVDVSDLLDQARQRGDFVMFEGAQGTLLDIDHGTYPYVTSSNTTAGGVATGSGLGPRYVDYVLGILKAYSTRVGAGPFPAELFDETGEFLCKQGNEFGATTGRRRRTGWLDTVAVRRAVQLNSLSGFCLTKLDVLDGLKEVKLCVAYRMPDGREVTTTPLAADDWKGVEPIYETMPGWSESTFGVKDRSGLPQAALNYIKRIEELTGVPIDIISTGPDRTETMILRDPFDA.

Residues 13–19 (GDEGKGK) and 41–43 (GHT) each bind GTP. Aspartate 14 acts as the Proton acceptor in catalysis. Residues aspartate 14 and glycine 41 each contribute to the Mg(2+) site. IMP contacts are provided by residues 14–17 (DEGK), 39–42 (NAGH), threonine 130, arginine 144, glutamine 225, threonine 240, and arginine 304. The Proton donor role is filled by histidine 42. 300-306 (ATTGRRR) is a binding site for substrate. GTP contacts are provided by residues arginine 306, 332–334 (KLD), and 415–417 (STG).

Belongs to the adenylosuccinate synthetase family. In terms of assembly, homodimer. Mg(2+) is required as a cofactor.

The protein resides in the cytoplasm. The enzyme catalyses IMP + L-aspartate + GTP = N(6)-(1,2-dicarboxyethyl)-AMP + GDP + phosphate + 2 H(+). The protein operates within purine metabolism; AMP biosynthesis via de novo pathway; AMP from IMP: step 1/2. Plays an important role in the de novo pathway of purine nucleotide biosynthesis. Catalyzes the first committed step in the biosynthesis of AMP from IMP. This chain is Adenylosuccinate synthetase, found in Shigella flexneri serotype 5b (strain 8401).